Consider the following 233-residue polypeptide: tRNA (guanine-N(1)-)-methyltransferase (233 aa).

S-adenosyl-L-methionine is bound by residues Gly113 and 133–138; that span reads VGDYVL.

The protein belongs to the RNA methyltransferase TrmD family. Homodimer.

The protein localises to the cytoplasm. It catalyses the reaction guanosine(37) in tRNA + S-adenosyl-L-methionine = N(1)-methylguanosine(37) in tRNA + S-adenosyl-L-homocysteine + H(+). Its function is as follows. Specifically methylates guanosine-37 in various tRNAs. The polypeptide is tRNA (guanine-N(1)-)-methyltransferase (Rhizobium etli (strain ATCC 51251 / DSM 11541 / JCM 21823 / NBRC 15573 / CFN 42)).